We begin with the raw amino-acid sequence, 102 residues long: MKDLRTLAAYALALLLLATFVSHSWSAPKGSFQRRNWTPQAMLYLKGTQGRRFVSEDRNEGDLYDTIRLESRSQNTENLSISKAAAFLLNILQQARDEDEPY.

Positions 1–26 (MKDLRTLAAYALALLLLATFVSHSWS) are cleaved as a signal peptide. A propeptide spanning residues 27-35 (APKGSFQRR) is cleaved from the precursor. Gln-49 is subject to Glutamine amide. Residues 50 to 102 (GRRFVSEDRNEGDLYDTIRLESRSQNTENLSISKAAAFLLNILQQARDEDEPY) constitute a propeptide that is removed on maturation.

The protein belongs to the spexin family. As to expression, mainly expressed in the brain and ovary. Detected bilaterally in the adult brainstem. Expressed in neurons in the dorsal habenula (dHb). In the dHb some neurons project into the interpeduncular nucleus (IPN) where expression often overlaps with galr2a and galr2b. Weakly expressed in the liver, intestine, kidney, heart and gill.

It localises to the secreted. The protein localises to the extracellular space. It is found in the cytoplasmic vesicle. The protein resides in the secretory vesicle. Its function is as follows. Plays a role in the regulation of food intake and energy metabolism. May also be involved in suppressing the anxiety response by promoting the expression of serotonin-related genes such as fev, tph2 and slc6a4a. In terms of biological role, acts as a ligand for galanin receptors galr2a and galr2b. Brain administration of the peptide inhibits food consumption and elevates levels of glucose, triacylglycerol and cholesterol in the serum. Likely to control food intake by regulating appetite related genes which includes the negative regulation of the orexigenic factor agrp. By controlling food intake it may act as a satiety factor in energy metabolism. This Danio rerio (Zebrafish) protein is Spexin prohormone 1 (spx).